Consider the following 317-residue polypeptide: Ribosomal protein L11 methyltransferase (317 aa).

S-adenosyl-L-methionine-binding residues include T158, G179, D201, and N244.

The protein belongs to the methyltransferase superfamily. PrmA family.

It localises to the cytoplasm. The catalysed reaction is L-lysyl-[protein] + 3 S-adenosyl-L-methionine = N(6),N(6),N(6)-trimethyl-L-lysyl-[protein] + 3 S-adenosyl-L-homocysteine + 3 H(+). Methylates ribosomal protein L11. The chain is Ribosomal protein L11 methyltransferase from Streptococcus equi subsp. zooepidemicus (strain H70).